A 109-amino-acid chain; its full sequence is Spermidine export protein MdtI (109 aa).

4 consecutive transmembrane segments (helical) span residues phenylalanine 6–leucine 26, tryptophan 36–valine 56, alanine 64–phenylalanine 84, and leucine 88–leucine 108.

The protein belongs to the drug/metabolite transporter (DMT) superfamily. Small multidrug resistance (SMR) (TC 2.A.7.1) family. MdtI subfamily. Forms a complex with MdtJ.

It localises to the cell inner membrane. In terms of biological role, catalyzes the excretion of spermidine. The polypeptide is Spermidine export protein MdtI (Yersinia pseudotuberculosis serotype O:1b (strain IP 31758)).